The sequence spans 834 residues: Protein translocase subunit SecA (834 aa).

ATP-binding positions include Gln-85, 103 to 107, and Asp-491; that span reads GEGKT. Residues Cys-818, Cys-820, Cys-829, and Cys-830 each contribute to the Zn(2+) site.

Belongs to the SecA family. As to quaternary structure, monomer and homodimer. Part of the essential Sec protein translocation apparatus which comprises SecA, SecYEG and auxiliary proteins SecDF. Other proteins may also be involved. Zn(2+) serves as cofactor.

The protein resides in the cell membrane. It is found in the cytoplasm. It catalyses the reaction ATP + H2O + cellular proteinSide 1 = ADP + phosphate + cellular proteinSide 2.. Its function is as follows. Part of the Sec protein translocase complex. Interacts with the SecYEG preprotein conducting channel. Has a central role in coupling the hydrolysis of ATP to the transfer of proteins into and across the cell membrane, serving as an ATP-driven molecular motor driving the stepwise translocation of polypeptide chains across the membrane. The chain is Protein translocase subunit SecA from Clostridium kluyveri (strain ATCC 8527 / DSM 555 / NBRC 12016 / NCIMB 10680 / K1).